We begin with the raw amino-acid sequence, 230 residues long: Androgen-dependent TFPI-regulating protein (230 aa).

Residues 1-3 (MTK) are Cytoplasmic-facing. Residues 4–24 (TSTCIYHFLVLSWYTFLNYYI) form a helical membrane-spanning segment. The Extracellular portion of the chain corresponds to 25 to 46 (SQEGKDEVKPKILANGARWKYM). The helical transmembrane segment at 47–67 (TLLNLLLQTIFYGVTCLDDVL) threads the bilayer. Topologically, residues 68–85 (KRTKGGKDIKFLTAFRDL) are cytoplasmic. The helical transmembrane segment at 86-106 (LFTTLAFPVSTFVFLAFWILF) threads the bilayer. Residues 107-119 (LYNRDLIYPKVLD) lie on the Extracellular side of the membrane. Residues 120-140 (TVIPVWLNHAMHTFIFPITLA) form a helical membrane-spanning segment. Topologically, residues 141-154 (EVVLRPHSYPSKKT) are cytoplasmic. A helical membrane pass occupies residues 155 to 175 (GLTLLAAASIAYISRILWLYF). Over 176–189 (ETGTWVYPVFAKLS) the chain is Extracellular. Residues 190 to 210 (LLGLAAFFSLSYVFIASIYLL) form a helical membrane-spanning segment. At 211–230 (GEKLNHWKWGDMRQPRKKRK) the chain is on the cytoplasmic side.

This sequence belongs to the AIG1 family. Expressed in cultured endothelial cells and in placenta.

The protein localises to the cell membrane. The catalysed reaction is 9-hexadecanoyloxy-octadecanoate + H2O = 9-hydroxy-octadecanoate + hexadecanoate + H(+). It carries out the reaction 12-hexadecanoyloxy-octadecanoate + H2O = 12-hydroxyoctadecanoate + hexadecanoate + H(+). It catalyses the reaction 9-(9Z-hexadecenoyloxy)-octadecanoate + H2O = (9Z)-hexadecenoate + 9-hydroxy-octadecanoate + H(+). The enzyme catalyses 12-(9Z-hexadecenoyloxy)-octadecanoate + H2O = 12-hydroxyoctadecanoate + (9Z)-hexadecenoate + H(+). The catalysed reaction is 13-(9Z-hexadecenoyloxy)-octadecanoate + H2O = 13-hydroxy-octadecanoate + (9Z)-hexadecenoate + H(+). It carries out the reaction 9-octadecanoyloxy-octadecanoate + H2O = 9-hydroxy-octadecanoate + octadecanoate + H(+). It catalyses the reaction 12-octadecanoyloxy-octadecanoate + H2O = 12-hydroxyoctadecanoate + octadecanoate + H(+). The enzyme catalyses 13-octadecanoyloxy-octadecanoate + H2O = 13-hydroxy-octadecanoate + octadecanoate + H(+). The catalysed reaction is 9-(9Z-octadecenoyloxy)-octadecanoate + H2O = 9-hydroxy-octadecanoate + (9Z)-octadecenoate + H(+). It carries out the reaction 12-(9Z-octadecenoyloxy)-octadecanoate + H2O = 12-hydroxyoctadecanoate + (9Z)-octadecenoate + H(+). It catalyses the reaction 13-(9Z-octadecenoyloxy)-octadecanoate + H2O = 13-hydroxy-octadecanoate + (9Z)-octadecenoate + H(+). The enzyme catalyses 5-(9Z-octadecenoyloxy)-octadecanoate + H2O = 5-hydroxy-octadecanoate + (9Z)-octadecenoate + H(+). Inhibited by N-hydroxyhydantoin carbamate JJH260 and beta-lactone KC01. Functionally, hydrolyzes bioactive fatty-acid esters of hydroxy-fatty acids (FAHFAs), but not other major classes of lipids. Show a preference for FAHFAs with branching distal from the carboxylate head group of the lipids. Regulates the expression and the cell-associated anticoagulant activity of the inhibitor TFPI in endothelial cells (in vitro). The sequence is that of Androgen-dependent TFPI-regulating protein (ADTRP) from Homo sapiens (Human).